Here is a 427-residue protein sequence, read N- to C-terminus: 3-phosphoshikimate 1-carboxyvinyltransferase (427 aa).

3-phosphoshikimate contacts are provided by K22, S23, and R27. K22 contributes to the phosphoenolpyruvate binding site. G96 and R124 together coordinate phosphoenolpyruvate. S170, S171, Q172, S198, D314, N337, and K341 together coordinate 3-phosphoshikimate. Residue Q172 coordinates phosphoenolpyruvate. The Proton acceptor role is filled by D314. Phosphoenolpyruvate contacts are provided by R345, R387, and K412.

Belongs to the EPSP synthase family. As to quaternary structure, monomer.

It is found in the cytoplasm. The enzyme catalyses 3-phosphoshikimate + phosphoenolpyruvate = 5-O-(1-carboxyvinyl)-3-phosphoshikimate + phosphate. It functions in the pathway metabolic intermediate biosynthesis; chorismate biosynthesis; chorismate from D-erythrose 4-phosphate and phosphoenolpyruvate: step 6/7. Functionally, catalyzes the transfer of the enolpyruvyl moiety of phosphoenolpyruvate (PEP) to the 5-hydroxyl of shikimate-3-phosphate (S3P) to produce enolpyruvyl shikimate-3-phosphate and inorganic phosphate. The chain is 3-phosphoshikimate 1-carboxyvinyltransferase from Sulfurovum sp. (strain NBC37-1).